Reading from the N-terminus, the 161-residue chain is Regulator of ribonuclease activity A (161 aa).

Belongs to the RraA family. In terms of assembly, homotrimer. Binds to both RNA-binding sites in the C-terminal region of Rne and to RhlB.

The protein localises to the cytoplasm. Globally modulates RNA abundance by binding to RNase E (Rne) and regulating its endonucleolytic activity. Can modulate Rne action in a substrate-dependent manner by altering the composition of the degradosome. Modulates RNA-binding and helicase activities of the degradosome. The chain is Regulator of ribonuclease activity A from Shigella flexneri serotype 5b (strain 8401).